A 215-amino-acid chain; its full sequence is Ribosomal RNA small subunit methyltransferase G (215 aa).

Residues Gly-77, Phe-82, 130-131, and Arg-146 contribute to the S-adenosyl-L-methionine site; that span reads IE.

It belongs to the methyltransferase superfamily. RNA methyltransferase RsmG family.

It is found in the cytoplasm. It carries out the reaction guanosine(527) in 16S rRNA + S-adenosyl-L-methionine = N(7)-methylguanosine(527) in 16S rRNA + S-adenosyl-L-homocysteine. Functionally, specifically methylates the N7 position of guanine in position 527 of 16S rRNA. This Bartonella quintana (strain Toulouse) (Rochalimaea quintana) protein is Ribosomal RNA small subunit methyltransferase G.